The following is a 685-amino-acid chain: DNA ligase (685 aa).

Residues 47–51 (DSEYD), 96–97 (SL), and E125 each bind NAD(+). Residue K127 is the N6-AMP-lysine intermediate of the active site. NAD(+)-binding residues include R148, E185, K304, and K328. C422, C425, C440, and C446 together coordinate Zn(2+). A BRCT domain is found at 605-685 (ADAQPLKGQT…ALLALFAANR (81 aa)).

It belongs to the NAD-dependent DNA ligase family. LigA subfamily. Mg(2+) serves as cofactor. Mn(2+) is required as a cofactor.

The enzyme catalyses NAD(+) + (deoxyribonucleotide)n-3'-hydroxyl + 5'-phospho-(deoxyribonucleotide)m = (deoxyribonucleotide)n+m + AMP + beta-nicotinamide D-nucleotide.. DNA ligase that catalyzes the formation of phosphodiester linkages between 5'-phosphoryl and 3'-hydroxyl groups in double-stranded DNA using NAD as a coenzyme and as the energy source for the reaction. It is essential for DNA replication and repair of damaged DNA. This is DNA ligase from Shewanella putrefaciens (strain CN-32 / ATCC BAA-453).